Here is an 88-residue protein sequence, read N- to C-terminus: Class II hydrophobin 5 (88 aa).

The N-terminal stretch at 1–14 is a signal peptide; the sequence is MQFLVLALASLAAA. 4 disulfide bridges follow: Cys-27–Cys-73, Cys-35–Cys-64, Cys-36–Cys-48, and Cys-74–Cys-85.

This sequence belongs to the cerato-ulmin hydrophobin family. As to quaternary structure, homotetramer. Further self-assembles to form highly ordered films at water-air interfaces through intermolecular interactions. As to expression, only appears on young aerial hyphae. HCf-5 is the most abundant transcript in sporulating mycelium.

The protein localises to the secreted. The protein resides in the cell wall. In terms of biological role, aerial growth, conidiation, and dispersal of filamentous fungi in the environment rely upon a capability of their secreting small amphipathic proteins called hydrophobins (HPBs) with low sequence identity. Class I can self-assemble into an outermost layer of rodlet bundles on aerial cell surfaces, conferring cellular hydrophobicity that supports fungal growth, development and dispersal; whereas Class II form highly ordered films at water-air interfaces through intermolecular interactions but contribute nothing to the rodlet structure. This is Class II hydrophobin 5 from Passalora fulva (Tomato leaf mold).